Reading from the N-terminus, the 242-residue chain is Glucosamine-6-phosphate deaminase (242 aa).

The Proton acceptor; for enolization step role is filled by Asp-67. Asn-137 acts as the For ring-opening step in catalysis. Catalysis depends on His-139, which acts as the Proton acceptor; for ring-opening step. Residue Glu-144 is the For ring-opening step of the active site.

The protein belongs to the glucosamine/galactosamine-6-phosphate isomerase family. NagB subfamily.

It carries out the reaction alpha-D-glucosamine 6-phosphate + H2O = beta-D-fructose 6-phosphate + NH4(+). Its pathway is amino-sugar metabolism; N-acetylneuraminate degradation; D-fructose 6-phosphate from N-acetylneuraminate: step 5/5. Functionally, catalyzes the reversible isomerization-deamination of glucosamine 6-phosphate (GlcN6P) to form fructose 6-phosphate (Fru6P) and ammonium ion. The protein is Glucosamine-6-phosphate deaminase of Staphylococcus saprophyticus subsp. saprophyticus (strain ATCC 15305 / DSM 20229 / NCIMB 8711 / NCTC 7292 / S-41).